The primary structure comprises 350 residues: Putative zinc metalloprotease jhp_0242 (350 aa).

His16 provides a ligand contact to Zn(2+). Glu17 is a catalytic residue. Zn(2+) is bound at residue His20. 5 consecutive transmembrane segments (helical) span residues 43 to 63 (WFFKLFGTQFALSLIPLGGYV), 94 to 114 (LWILFGGAFFNFLFAVLVYFF), 249 to 269 (LIMGSASVKELSGVIGIVGAL), 277 to 297 (MLLLFGAFLSINLGILNLLPI), and 326 to 346 (LWLVGVGFLVFVMFLGLFNDI). Positions 108 to 177 (AVLVYFFLAL…GELILEIERN (70 aa)) constitute a PDZ domain.

Belongs to the peptidase M50B family. It depends on Zn(2+) as a cofactor.

It localises to the cell inner membrane. This chain is Putative zinc metalloprotease jhp_0242, found in Helicobacter pylori (strain J99 / ATCC 700824) (Campylobacter pylori J99).